We begin with the raw amino-acid sequence, 589 residues long: (E)-beta-ocimene synthase, chloroplastic (589 aa).

The N-terminal 25 residues, 1-25 (MAAHNLCFNSAFVCNVHHQKTQHFP), are a transit peptide targeting the chloroplast. Positions 302, 339, 343, 480, and 483 each coordinate (2E,6E)-farnesyl diphosphate. Residues D339 and D343 each contribute to the Mg(2+) site. Residues 339-343 (DDIYD) carry the DDXXD motif motif. Residues N483, T487, and E491 each coordinate Mg(2+).

The protein belongs to the terpene synthase family. Tpsb subfamily. Requires Mg(2+) as cofactor. The cofactor is Mn(2+). Expressed exclusively in flowers.

The protein localises to the plastid. The protein resides in the chloroplast. It catalyses the reaction (2E,6E)-farnesyl diphosphate = (3E,6E)-alpha-farnesene + diphosphate. The protein operates within secondary metabolite biosynthesis; terpenoid biosynthesis. In terms of biological role, predominantly involved in monoterpene (C10) biosynthesis. Using GPP as substrate, the major product is (E)-beta-ocimene with minor amounts of (Z)-beta-ocimene and myrcene. Using FPP as substrate, could also be able to synthesize in vitro sesquiterpenes (C15) with (E,E)-alpha-farnesene as the major product and with (Z,E)-alpha-farnesene and (E,E)-beta-farnesene as minor products. The chain is (E)-beta-ocimene synthase, chloroplastic (TPS02) from Arabidopsis thaliana (Mouse-ear cress).